The primary structure comprises 148 residues: Putative nickel-responsive regulator (148 aa).

Ni(2+) contacts are provided by His88, His99, His101, and Cys107.

It belongs to the transcriptional regulatory CopG/NikR family. The cofactor is Ni(2+).

In terms of biological role, transcriptional regulator. The chain is Putative nickel-responsive regulator from Helicobacter pylori (strain G27).